Reading from the N-terminus, the 262-residue chain is Indole-3-glycerol phosphate synthase (262 aa).

This sequence belongs to the TrpC family.

It catalyses the reaction 1-(2-carboxyphenylamino)-1-deoxy-D-ribulose 5-phosphate + H(+) = (1S,2R)-1-C-(indol-3-yl)glycerol 3-phosphate + CO2 + H2O. Its pathway is amino-acid biosynthesis; L-tryptophan biosynthesis; L-tryptophan from chorismate: step 4/5. The protein is Indole-3-glycerol phosphate synthase of Aromatoleum aromaticum (strain DSM 19018 / LMG 30748 / EbN1) (Azoarcus sp. (strain EbN1)).